The primary structure comprises 299 residues: Regucalcin (299 aa).

Position 18 (E18) interacts with a divalent metal cation. Residues R101, N103, and E121 each coordinate substrate. K144 is modified (N6-succinyllysine). A divalent metal cation contacts are provided by N154 and D204. D204 (proton donor/acceptor) is an active-site residue. Residues K244 and K253 each carry the N6-succinyllysine modification. Phosphoserine is present on S268.

It belongs to the SMP-30/CGR1 family. As to quaternary structure, monomer. It depends on Zn(2+) as a cofactor. Mn(2+) serves as cofactor. Ca(2+) is required as a cofactor. Requires Mg(2+) as cofactor. The cofactor is Co(2+). In terms of processing, the N-terminus is blocked. Detected in liver (at protein level). Hepatocytes and renal proximal tubular epithelium.

The protein localises to the cytoplasm. It catalyses the reaction D-glucono-1,5-lactone + H2O = D-gluconate + H(+). Its pathway is cofactor biosynthesis; L-ascorbate biosynthesis via UDP-alpha-D-glucuronate pathway; L-ascorbate from UDP-alpha-D-glucuronate: step 3/4. Functionally, gluconolactonase with low activity towards other sugar lactones, including gulonolactone and galactonolactone. Catalyzes a key step in ascorbic acid (vitamin C) biosynthesis. Can also hydrolyze diisopropyl phosphorofluoridate and phenylacetate (in vitro). Calcium-binding protein. Modulates Ca(2+) signaling, and Ca(2+)-dependent cellular processes and enzyme activities. In Rattus norvegicus (Rat), this protein is Regucalcin (Rgn).